The chain runs to 469 residues: Glutamate--tRNA ligase (469 aa).

The 'HIGH' region signature appears at 9–19 (PSPTGFLHVGG). The 'KMSKS' region motif lies at 236-240 (KLSKR). Position 239 (Lys-239) interacts with ATP.

The protein belongs to the class-I aminoacyl-tRNA synthetase family. Glutamate--tRNA ligase type 1 subfamily. Monomer.

Its subcellular location is the cytoplasm. It carries out the reaction tRNA(Glu) + L-glutamate + ATP = L-glutamyl-tRNA(Glu) + AMP + diphosphate. Its function is as follows. Catalyzes the attachment of glutamate to tRNA(Glu) in a two-step reaction: glutamate is first activated by ATP to form Glu-AMP and then transferred to the acceptor end of tRNA(Glu). This chain is Glutamate--tRNA ligase, found in Shewanella amazonensis (strain ATCC BAA-1098 / SB2B).